Here is a 189-residue protein sequence, read N- to C-terminus: UPF0149 protein VFMJ11_2207 (189 aa).

It belongs to the UPF0149 family.

This chain is UPF0149 protein VFMJ11_2207, found in Aliivibrio fischeri (strain MJ11) (Vibrio fischeri).